The following is a 209-amino-acid chain: Octanoyltransferase (209 aa).

The 180-residue stretch at 30 to 209 (DHEPEIIYLV…IQTEFNKIFK (180 aa)) folds into the BPL/LPL catalytic domain. Residues 69–76 (RGGKFTFH), 143–145 (AIG), and 156–158 (GVA) contribute to the substrate site. The active-site Acyl-thioester intermediate is the Cys-174.

Belongs to the LipB family.

Its subcellular location is the cytoplasm. The enzyme catalyses octanoyl-[ACP] + L-lysyl-[protein] = N(6)-octanoyl-L-lysyl-[protein] + holo-[ACP] + H(+). It functions in the pathway protein modification; protein lipoylation via endogenous pathway; protein N(6)-(lipoyl)lysine from octanoyl-[acyl-carrier-protein]: step 1/2. Functionally, catalyzes the transfer of endogenously produced octanoic acid from octanoyl-acyl-carrier-protein onto the lipoyl domains of lipoate-dependent enzymes. Lipoyl-ACP can also act as a substrate although octanoyl-ACP is likely to be the physiological substrate. The polypeptide is Octanoyltransferase (Rickettsia peacockii (strain Rustic)).